Reading from the N-terminus, the 306-residue chain is 17-beta-hydroxysteroid dehydrogenase type 3 (306 aa).

NADP(+) is bound at residue 44–73; sequence GQWAVITGAGDGIGKAYSFELARHGLNVVL. Residue Ser181 participates in substrate binding. The active-site Proton acceptor is the Tyr194.

Belongs to the short-chain dehydrogenases/reductases (SDR) family. 17-beta-HSD 3 subfamily.

The protein resides in the endoplasmic reticulum. The enzyme catalyses a 17beta-hydroxy steroid + NADP(+) = a 17-oxo steroid + NADPH + H(+). It carries out the reaction testosterone + NADP(+) = androst-4-ene-3,17-dione + NADPH + H(+). The catalysed reaction is 17beta-estradiol + NADP(+) = estrone + NADPH + H(+). It catalyses the reaction 3beta-hydroxyandrost-5-en-17-one + NADPH + H(+) = androst-5-en-3beta,17beta-diol + NADP(+). The enzyme catalyses 17beta-hydroxy-5alpha-androstan-3-one + NADP(+) = 5alpha-androstan-3,17-dione + NADPH + H(+). It carries out the reaction androsterone + NADPH + H(+) = 5alpha-androstane-3alpha,17beta-diol + NADP(+). The catalysed reaction is 3beta-hydroxy-5alpha-androstan-17-one + NADPH + H(+) = 5alpha-androstane-3beta,17beta-diol + NADP(+). It catalyses the reaction androst-4-ene-3,11,17-trione + NADPH + H(+) = 17beta-hydroxyandrost-4-ene-3,11-dione + NADP(+). The enzyme catalyses 11beta-hydroxyandrost-4-ene-3,17-dione + NADPH + H(+) = 11beta,17beta-dihydroxyandrost-4-ene-3-one + NADP(+). The protein operates within hormone biosynthesis; testosterone biosynthesis. Its pathway is steroid metabolism. Functionally, catalyzes the conversion of 17-oxosteroids to 17beta-hydroxysteroids. Favors the reduction of androstenedione to testosterone. Testosterone is the key androgen driving male development and function. Uses NADPH while the two other EDH17B enzymes use NADH. Androgens such as epiandrosterone, dehydroepiandrosterone, androsterone and androstanedione are accepted as substrates and reduced at C-17. Can reduce 11-ketoandrostenedione as well as 11beta-hydroxyandrostenedione at C-17 to the respective testosterone forms. Plays a role in the rate-limiting-step for the maximum level of testosterone production by the testis but does not affect basal testosterone production. The protein is 17-beta-hydroxysteroid dehydrogenase type 3 of Rattus norvegicus (Rat).